A 251-amino-acid polypeptide reads, in one-letter code: Triosephosphate isomerase (251 aa).

9–11 (NWK) lines the substrate pocket. His95 (electrophile) is an active-site residue. The Proton acceptor role is filled by Glu167. Residues Gly173, Ser213, and 234–235 (GG) each bind substrate. A Phosphoserine modification is found at Ser213.

This sequence belongs to the triosephosphate isomerase family. As to quaternary structure, homodimer.

The protein localises to the cytoplasm. The enzyme catalyses D-glyceraldehyde 3-phosphate = dihydroxyacetone phosphate. The protein operates within carbohydrate biosynthesis; gluconeogenesis. It functions in the pathway carbohydrate degradation; glycolysis; D-glyceraldehyde 3-phosphate from glycerone phosphate: step 1/1. Its function is as follows. Involved in the gluconeogenesis. Catalyzes stereospecifically the conversion of dihydroxyacetone phosphate (DHAP) to D-glyceraldehyde-3-phosphate (G3P). The protein is Triosephosphate isomerase of Shouchella clausii (strain KSM-K16) (Alkalihalobacillus clausii).